The chain runs to 241 residues: 2-C-methyl-D-erythritol 4-phosphate cytidylyltransferase (241 aa).

The protein belongs to the IspD/TarI cytidylyltransferase family. IspD subfamily. Homodimer.

It carries out the reaction 2-C-methyl-D-erythritol 4-phosphate + CTP + H(+) = 4-CDP-2-C-methyl-D-erythritol + diphosphate. Its pathway is isoprenoid biosynthesis; isopentenyl diphosphate biosynthesis via DXP pathway; isopentenyl diphosphate from 1-deoxy-D-xylulose 5-phosphate: step 2/6. Functionally, catalyzes the formation of 4-diphosphocytidyl-2-C-methyl-D-erythritol from CTP and 2-C-methyl-D-erythritol 4-phosphate (MEP). In Yersinia pestis, this protein is 2-C-methyl-D-erythritol 4-phosphate cytidylyltransferase.